Here is a 459-residue protein sequence, read N- to C-terminus: Protein YTP1 (459 aa).

Residues 1–6 lie on the Extracellular side of the membrane; that stretch reads MTAANK. A helical transmembrane segment spans residues 7–27; the sequence is NIVFGFSRSISAILLICFFFE. Over 28 to 59 the chain is Cytoplasmic; that stretch reads KVCGDMEHDMGMDDTSGYTRPEIVQAGSKSFH. The helical transmembrane segment at 60-80 threads the bilayer; sequence WLCTLGFLLLLPSVVTCLSFA. At 81–82 the chain is on the extracellular side; the sequence is GR. The helical transmembrane segment at 83 to 103 threads the bilayer; it reads IYSATLLQCTCAVYAFLEAAV. At 104-122 the chain is on the cytoplasmic side; that stretch reads LRFQDNDGVENRTSRGTAW. The chain crosses the membrane as a helical span at residues 123–143; the sequence is FLVGLTWITLFFGGLAGGTGF. Over 144–170 the chain is Extracellular; that stretch reads LVKSKRLQTFISNAGEKRLSYIHRGLS. Residues 171-191 traverse the membrane as a helical segment; that stretch reads FLTVLTGWVKVCLAPVALFGF. At 192-205 the chain is on the cytoplasmic side; that stretch reads CREAHTGQCIAHGI. The helical transmembrane segment at 206–226 threads the bilayer; it reads MGSAFVLYGFIYVLVLVIPWI. Topologically, residues 227 to 266 are extracellular; that stretch reads RSAQTSYSQDYVDSWVMCIWGVVNTFTEHRWGREGWSVHD. A helical transmembrane segment spans residues 267 to 287; the sequence is YQHTFMGIIWWTGGILGIFLS. The Cytoplasmic portion of the chain corresponds to 288–295; the sequence is RNGRRTFV. Residues 296–316 form a helical membrane-spanning segment; sequence PSLIIIFTGWAMSEHAQHLII. Residues 317 to 322 are Extracellular-facing; the sequence is STKVHN. A helical transmembrane segment spans residues 323-343; the sequence is MFGLVLMCGGALRIIEISFLL. Residues 344–351 are Cytoplasmic-facing; that stretch reads RDKRTLDK. A helical membrane pass occupies residues 352–372; the sequence is IHSFQYLAPFCLVCSGLLFMG. Residues 373–389 are Extracellular-facing; the sequence is ANEEQLILVLRLGGDHS. A helical membrane pass occupies residues 390–410; it reads AYVLIIVSGAFLVYFWMIACL. Over 411 to 459 the chain is Cytoplasmic; it reads EFYLYLLEKGKQGFLPKSYELEEENNNVSFELDNISNEDVDEDTTPFNV.

It localises to the membrane. This is Protein YTP1 (YTP1) from Saccharomyces cerevisiae (strain ATCC 204508 / S288c) (Baker's yeast).